We begin with the raw amino-acid sequence, 137 residues long: uncharacterized protein (137 aa).

The chain crosses the membrane as a helical span at residues 111 to 131 (LAVGVLVGSNLVVGSLVFALL).

It localises to the membrane. This is an uncharacterized protein from Saccharomyces cerevisiae (strain ATCC 204508 / S288c) (Baker's yeast).